The primary structure comprises 443 residues: Cyclic AMP receptor 4 (443 aa).

The Extracellular portion of the chain corresponds to 1-11 (MKVLQEINLTY). Asn8 carries N-linked (GlcNAc...) asparagine glycosylation. A helical membrane pass occupies residues 12–32 (SILVIADFSSIFGCLLVLIAF). Residues 33–44 (KKLKLLRNHITR) are Cytoplasmic-facing. Residues 45–65 (VIACFCVSSLLKDIISTGLTL) form a helical membrane-spanning segment. The Extracellular segment spans residues 66–89 (SLGPQNEAGSTSFQCYLYAITITY). The chain crosses the membrane as a helical span at residues 90–110 (GSLACWLWTLCLAFSIYNLIV). Over 111–119 (KREPEPEKY) the chain is Cytoplasmic. A helical membrane pass occupies residues 120–140 (EKFYHGVCWTIPLICVIVMLA). The Extracellular portion of the chain corresponds to 141–161 (KKTIEPVGNWCWISEKYVGYR). Residues 162–182 (FGLFYGPFFAIWIISAVLVGL) traverse the membrane as a helical segment. Residues 183 to 208 (TSRYTYSVIRNSVSDNKDKHMTYQFK) are Cytoplasmic-facing. Residues 209–229 (LINYIIVFLLCWVFAIVNRIL) form a helical membrane-spanning segment. Residues 230–263 (NGLGYYPTLPNILHTYFSVSHGFFASVTFIYNNP) are Extracellular-facing. The chain crosses the membrane as a helical span at residues 264-284 (LMWRYWGSKIFLIFAKFGYFV). The Cytoplasmic portion of the chain corresponds to 285-443 (ELQRRLDRNK…DEREKKDNKF (159 aa)). Disordered stretches follow at residues 325 to 354 (NDIS…QQSP) and 396 to 443 (SFEI…DNKF). Low complexity predominate over residues 332–352 (QQQQQQQQTPQQPQQQFQQQQ). Polar residues predominate over residues 396–410 (SFEITQPSNDLNTIE). Over residues 411-425 (NNNNYNNNNNNNNNN) the composition is skewed to low complexity. A compositionally biased stretch (basic and acidic residues) spans 429–443 (IEKEKDEREKKDNKF).

It belongs to the G-protein coupled receptor 5 family. C-terminal Ser or Thr residues may be phosphorylated.

The protein resides in the membrane. Its function is as follows. Receptor for cAMP. Regulates axial patterning and cellular differentiation during late development. The activity of this receptor is mediated by G proteins. This is Cyclic AMP receptor 4 (carD) from Dictyostelium discoideum (Social amoeba).